A 447-amino-acid polypeptide reads, in one-letter code: Ribulose bisphosphate carboxylase large chain (447 aa).

An N6,N6,N6-trimethyllysine modification is found at Lys5. Residues Asn114 and Thr164 each coordinate substrate. Lys166 functions as the Proton acceptor in the catalytic mechanism. A substrate-binding site is contributed by Lys168. Mg(2+) contacts are provided by Lys192, Asp194, and Glu195. N6-carboxylysine is present on Lys192. The active-site Proton acceptor is the His285. Residues Arg286, His318, and Ser370 each coordinate substrate.

The protein belongs to the RuBisCO large chain family. Type I subfamily. In terms of assembly, heterohexadecamer of 8 large chains and 8 small chains; disulfide-linked. The disulfide link is formed within the large subunit homodimers. Mg(2+) serves as cofactor. Post-translationally, the disulfide bond which can form in the large chain dimeric partners within the hexadecamer appears to be associated with oxidative stress and protein turnover.

Its subcellular location is the plastid. The protein resides in the chloroplast. The enzyme catalyses 2 (2R)-3-phosphoglycerate + 2 H(+) = D-ribulose 1,5-bisphosphate + CO2 + H2O. The catalysed reaction is D-ribulose 1,5-bisphosphate + O2 = 2-phosphoglycolate + (2R)-3-phosphoglycerate + 2 H(+). In terms of biological role, ruBisCO catalyzes two reactions: the carboxylation of D-ribulose 1,5-bisphosphate, the primary event in carbon dioxide fixation, as well as the oxidative fragmentation of the pentose substrate in the photorespiration process. Both reactions occur simultaneously and in competition at the same active site. This Camassia leichtlinii (Western quamash) protein is Ribulose bisphosphate carboxylase large chain.